Consider the following 234-residue polypeptide: Ribulose-phosphate 3-epimerase (234 aa).

Ser7 is a substrate binding site. Residues His32, Asp34, and His65 each coordinate a divalent metal cation. The active-site Proton acceptor is Asp34. Residues His65, 139–142, 172–174, and 194–195 each bind substrate; these read GFSG, DGG, and AS. Asp172 is an a divalent metal cation binding site. Asp172 acts as the Proton donor in catalysis.

This sequence belongs to the ribulose-phosphate 3-epimerase family. It depends on a divalent metal cation as a cofactor.

It catalyses the reaction D-ribulose 5-phosphate = D-xylulose 5-phosphate. It functions in the pathway carbohydrate degradation. In terms of biological role, catalyzes the reversible epimerization of D-ribulose 5-phosphate to D-xylulose 5-phosphate. The protein is Ribulose-phosphate 3-epimerase of Methanocaldococcus jannaschii (strain ATCC 43067 / DSM 2661 / JAL-1 / JCM 10045 / NBRC 100440) (Methanococcus jannaschii).